A 262-amino-acid polypeptide reads, in one-letter code: Steroid 5-alpha-reductase DET2 (262 aa).

6 helical membrane passes run 13 to 33 (CLLT…FLQA), 51 to 71 (IAWF…FPFG), 79 to 99 (SLLL…IYPL), 113 to 133 (FPIT…YIQA), 148 to 168 (WFWW…YINI), and 205 to 225 (AIEW…GFFL).

The protein belongs to the steroid 5-alpha reductase family.

The protein localises to the membrane. It catalyses the reaction a 3-oxo-5alpha-steroid + NADP(+) = a 3-oxo-Delta(4)-steroid + NADPH + H(+). The catalysed reaction is 5alpha-campestan-3-one + NADP(+) = campest-4-en-3-one + NADPH + H(+). The enzyme catalyses (22S,24R)-22-hydroxy-5alpha-ergostan-3-one + NADP(+) = (22S)-22-hydroxycampest-4-en-3-one + NADPH + H(+). It carries out the reaction 3-dehydro-6-deoxoteasterone + NADP(+) = (22R,23R)-22,23-dihydroxycampest-4-en-3-one + NADPH + H(+). It functions in the pathway plant hormone biosynthesis; brassinosteroid biosynthesis. With respect to regulation, inhibited by the 4-azasteroids 4-MA. Involved in a reduction step in the biosynthesis of the plant steroid, brassinolide (BL); acts at the second step in brassinolide biosynthesis in the 5alpha-reduction of (24R)- 24-methylcholest-4-en-3-one, which is further modified to form campestanol. Can use progesterone, testosterone, androstenedione and campestenone as substrate. Also catalyzes the conversion of campest-4-en-3-one (campesta-4-en-3-one, 4-en-3-one) to campest-3-one (campesta-3-one, 3-one), of (22S,24R)-22-hydroxyergost-4-en-3-one (22-hydroxy-campesta-4-en-3-one, 22-OH-4-en-3-one) to (22S,24R)-22-hydroxy-5alpha-ergostan-3-one (22-hydroxy-campesta-3-one, 22-OH-3-one), and of (22R,23R)-22,23-dihydroxy-5alpha-campestan-3-one (22,23,diOH-4-en-3-one) to (22R,23R)-22,23-dihydroxycampest-4-en-3-one (6-deoxo3DT). Required for the brassinosteroid- (BR) dependent regulation of seed size and shape as well as embryo development. In Arabidopsis thaliana (Mouse-ear cress), this protein is Steroid 5-alpha-reductase DET2.